The following is a 6199-amino-acid chain: Adhesion G-protein coupled receptor V1 (6199 aa).

An N-terminal signal peptide occupies residues 1 to 23 (MPAVLALSGLLLMLLTVSVRSES). 21 consecutive Calx-beta domains span residues 24–109 (AELR…VFIL), 126–230 (ATIT…VQLT), 249–355 (ISRN…QVVL), 380–480 (DKPY…LKLI), 637–737 (PDIA…ILTL), 753–853 (SREI…VVLS), 869–972 (NITV…ITLL), 997–1083 (IYFA…YIVL), 1099–1199 (TVVI…LRLM), 1434–1534 (PIPG…FYLQ), 1563–1655 (GLFS…RVRL), 1835–1937 (IIVT…VRLT), 1963–2063 (LFVF…FLEL), 2092–2190 (QVII…RIEL), 2208–2308 (ITIL…KVEL), 2425–2525 (AAFC…FIIK), 2582–2659 (VREE…QIGL), 2673–2773 (DTVT…RVIL), 2814–2908 (PSSL…LVNI), 2931–3029 (EIII…QLIL), and 3054–3154 (GHGI…TVTL). Topologically, residues 24-5803 (AELRFQGQTQ…IESLASFNEA (5780 aa)) are extracellular. EAR repeat units lie at residues 3239–3284 (VLAV…KWQG), 3285–3333 (VFVP…RVQA), 3336–3372 (NLTLEQTFSVSGFSVKHFSTDLKQYLIASSEIFVWNR), 3374–3420 (SFFL…QWTD), 3422–3467 (RFQN…LWGS), and 3471–3513 (VFQQ…SWRS). 13 consecutive Calx-beta domains span residues 3562 to 3605 (SNQS…RVSL), 3619 to 3719 (QVTF…TIVL), 3778 to 3854 (ITLS…FVNI), 3916 to 3985 (VLRL…MVKL), 4000 to 4103 (VVVS…IQLL), 4120 to 4220 (VVIR…QLRL), 4247 to 4335 (HGLF…FLNI), 4371 to 4471 (VIIQ…LQLT), 4493 to 4593 (DSPN…IIML), 4615 to 4715 (KFGD…TLRL), 4993 to 5076 (QHLV…VNLT), 5125 to 5225 (SEDS…IYLS), and 5260 to 5360 (VGFS…LVEV). A GAIN-B domain is found at 5636–5801 (PYFTIAAHHW…AEIESLASFN (166 aa)). 2 disulfides stabilise this stretch: Cys-5751–Cys-5780 and Cys-5768–Cys-5782. Positions 5751–5801 (CLLWNQAAESWLSDGQFCRLVDDTQNYVECACSHLSIYTAYAEIESLASFN) are GPS. A helical transmembrane segment spans residues 5804–5824 (FYAAGFICISGFALAMVSHLM). Residues 5825–5834 (CARFLMFAAK) lie on the Cytoplasmic side of the membrane. The chain crosses the membrane as a helical span at residues 5835 to 5855 (LLTHMMVACLGTQICFLVSAF). Over 5856–5864 (RGRMFSEDS) the chain is Extracellular. Residues 5865-5885 (CAALGLFFHYFHLSQFGWMLV) traverse the membrane as a helical segment. Residues 5886–5908 (QAINFWQILVMNDEHTERRYLLY) lie on the Cytoplasmic side of the membrane. A helical transmembrane segment spans residues 5909–5929 (FLLSWGLPALVIIVLVVVLLG). Over 5930-5954 (GFGWSIHSVYGLVQGDLCFIPNVYA) the chain is Extracellular. A helical membrane pass occupies residues 5955 to 5975 (ALCTAALVPLICLVGVLVIFI). At 5976 to 6001 (HAYQVTQQWKAYDDIYRGRTNSSEVP) the chain is on the cytoplasmic side. The helical transmembrane segment at 6002–6022 (MMLYLFALVTLVCVWAGLHMA) threads the bilayer. The Extracellular segment spans residues 6023-6025 (YRY). The chain crosses the membrane as a helical span at residues 6026–6046 (IWMLILLVIFNIFLGLYVFSV). The Cytoplasmic segment spans residues 6047–6199 (YFVMHNQLFW…RRIPIADTHL (153 aa)).

It belongs to the G-protein coupled receptor 2 family. Adhesion G-protein coupled receptor (ADGR) subfamily. Heterodimer of 2 chains generated by proteolytic processing; the large extracellular N-terminal fragment and the membrane-bound C-terminal fragment predominantly remain associated and non-covalently linked. Post-translationally, autoproteolytically processed at the GPS region of the GAIN-B domain; this cleavage modulates receptor activity.

It localises to the cell membrane. Its subcellular location is the cell projection. The protein resides in the stereocilium membrane. The protein localises to the photoreceptor inner segment. Functionally, receptor that may have an important role in the development of the sensory nervous system. The protein is Adhesion G-protein coupled receptor V1 (adgrv1) of Danio rerio (Zebrafish).